The primary structure comprises 201 residues: 3-isopropylmalate dehydratase small subunit (201 aa).

This sequence belongs to the LeuD family. LeuD type 1 subfamily. Heterodimer of LeuC and LeuD.

It carries out the reaction (2R,3S)-3-isopropylmalate = (2S)-2-isopropylmalate. The protein operates within amino-acid biosynthesis; L-leucine biosynthesis; L-leucine from 3-methyl-2-oxobutanoate: step 2/4. Catalyzes the isomerization between 2-isopropylmalate and 3-isopropylmalate, via the formation of 2-isopropylmaleate. This chain is 3-isopropylmalate dehydratase small subunit, found in Ruegeria pomeroyi (strain ATCC 700808 / DSM 15171 / DSS-3) (Silicibacter pomeroyi).